Reading from the N-terminus, the 465-residue chain is UDP-N-acetylmuramoylalanine--D-glutamate ligase (465 aa).

127–133 (GSNGKST) provides a ligand contact to ATP.

The protein belongs to the MurCDEF family.

It is found in the cytoplasm. The enzyme catalyses UDP-N-acetyl-alpha-D-muramoyl-L-alanine + D-glutamate + ATP = UDP-N-acetyl-alpha-D-muramoyl-L-alanyl-D-glutamate + ADP + phosphate + H(+). The protein operates within cell wall biogenesis; peptidoglycan biosynthesis. Functionally, cell wall formation. Catalyzes the addition of glutamate to the nucleotide precursor UDP-N-acetylmuramoyl-L-alanine (UMA). In Cereibacter sphaeroides (strain ATCC 17025 / ATH 2.4.3) (Rhodobacter sphaeroides), this protein is UDP-N-acetylmuramoylalanine--D-glutamate ligase.